Here is an 801-residue protein sequence, read N- to C-terminus: Probable inorganic carbon transporter subunit DabA (801 aa).

Residues C298, D300, H481, and C496 each contribute to the Zn(2+) site. The tract at residues 575-596 is disordered; the sequence is RENAAAERAESMGSDASSGVSE.

The protein belongs to the inorganic carbon transporter (TC 9.A.2) DabA family. Forms a complex with DabB. The cofactor is Zn(2+).

Its subcellular location is the cell membrane. In terms of biological role, part of an energy-coupled inorganic carbon pump. In Haloarcula marismortui (strain ATCC 43049 / DSM 3752 / JCM 8966 / VKM B-1809) (Halobacterium marismortui), this protein is Probable inorganic carbon transporter subunit DabA.